A 71-amino-acid polypeptide reads, in one-letter code: Protein MTH_1184 (71 aa).

This chain is Protein MTH_1184, found in Methanothermobacter thermautotrophicus (strain ATCC 29096 / DSM 1053 / JCM 10044 / NBRC 100330 / Delta H) (Methanobacterium thermoautotrophicum).